Here is a 267-residue protein sequence, read N- to C-terminus: tRNA pseudouridine synthase A (267 aa).

Asp-53 functions as the Nucleophile in the catalytic mechanism. Tyr-114 serves as a coordination point for substrate.

It belongs to the tRNA pseudouridine synthase TruA family. As to quaternary structure, homodimer.

It catalyses the reaction uridine(38/39/40) in tRNA = pseudouridine(38/39/40) in tRNA. Functionally, formation of pseudouridine at positions 38, 39 and 40 in the anticodon stem and loop of transfer RNAs. This chain is tRNA pseudouridine synthase A, found in Chlamydia trachomatis serovar A (strain ATCC VR-571B / DSM 19440 / HAR-13).